The following is a 119-amino-acid chain: Protein TusC (119 aa).

It belongs to the DsrF/TusC family. As to quaternary structure, heterohexamer, formed by a dimer of trimers. The hexameric TusBCD complex contains 2 copies each of TusB, TusC and TusD. The TusBCD complex interacts with TusE.

It is found in the cytoplasm. Functionally, part of a sulfur-relay system required for 2-thiolation of 5-methylaminomethyl-2-thiouridine (mnm(5)s(2)U) at tRNA wobble positions. The chain is Protein TusC from Shigella dysenteriae serotype 1 (strain Sd197).